Reading from the N-terminus, the 210-residue chain is Na(+)-translocating NADH-quinone reductase subunit D (210 aa).

A run of 6 helical transmembrane segments spans residues 14–34 (PIVS…ALAV), 42–62 (LVMT…ISML), 72–92 (IIVQ…VLQA), 103–123 (VFVG…AYAM), 131–151 (FMDG…VGFV), and 178–198 (NGLL…IWII).

It belongs to the NqrDE/RnfAE family. In terms of assembly, composed of six subunits; NqrA, NqrB, NqrC, NqrD, NqrE and NqrF.

The protein resides in the cell inner membrane. It catalyses the reaction a ubiquinone + n Na(+)(in) + NADH + H(+) = a ubiquinol + n Na(+)(out) + NAD(+). In terms of biological role, NQR complex catalyzes the reduction of ubiquinone-1 to ubiquinol by two successive reactions, coupled with the transport of Na(+) ions from the cytoplasm to the periplasm. NqrA to NqrE are probably involved in the second step, the conversion of ubisemiquinone to ubiquinol. This chain is Na(+)-translocating NADH-quinone reductase subunit D, found in Shewanella woodyi (strain ATCC 51908 / MS32).